A 428-amino-acid polypeptide reads, in one-letter code: MSLDLPPPPARGCRNGDVLKERGQREVFCGLTGIIWLHRKMQDAFFLVVGSRTCAHLLQSAAGVMIFAEPRFGTAILEEKDLAGLADANAELDREVERLLSRRPDIRQLFLVGSCPSEVIKLDLHRAAERLSAQHGPAVRVYNFTGSGIETTFTQGEDACLASIVPTLPATEARELLLVGALPDVVEDQAVSLLTALGIGPIRVLPAHHAAEAPGVGPNTVFALVQPFLGETHGALTRRGARHIAAPFPFGEEGTTLWLKAIADEFGVSPAKFEEVTAAPRARARKAVAAASETLKGKSLFFFPDSQLEPSLARFLTRECGMSAIEVGTPFLHRGILGPDLDLLAEGPVISEGQDVERQIDRVRATNPDLTVCGLGLANPLEAEGFTTKWAIELVFTPVHFYEQAGDLAGLFARPLRRRAILRREAAE.

Positions 29, 54, and 115 each coordinate [4Fe-4S] cluster.

It belongs to the BchN/ChlN family. Protochlorophyllide reductase is composed of three subunits; BchL, BchN and BchB. Forms a heterotetramer of two BchB and two BchN subunits. The cofactor is [4Fe-4S] cluster.

The enzyme catalyses chlorophyllide a + oxidized 2[4Fe-4S]-[ferredoxin] + 2 ADP + 2 phosphate = protochlorophyllide a + reduced 2[4Fe-4S]-[ferredoxin] + 2 ATP + 2 H2O. It functions in the pathway porphyrin-containing compound metabolism; bacteriochlorophyll biosynthesis (light-independent). Functionally, component of the dark-operative protochlorophyllide reductase (DPOR) that uses Mg-ATP and reduced ferredoxin to reduce ring D of protochlorophyllide (Pchlide) to form chlorophyllide a (Chlide). This reaction is light-independent. The NB-protein (BchN-BchB) is the catalytic component of the complex. The chain is Light-independent protochlorophyllide reductase subunit N from Cereibacter sphaeroides (strain ATCC 17025 / ATH 2.4.3) (Rhodobacter sphaeroides).